Consider the following 1203-residue polypeptide: Cation-transporting ATPase catp-5 (1203 aa).

The Cytoplasmic segment spans residues 1 to 68; the sequence is MNTSEREPLL…YAYKETIGRQ (68 aa). The segment at 21–42 is disordered; it reads TTDNPSTKIMKREKDNPKAKTT. Residues 69–89 form a helical membrane-spanning segment; that stretch reads ILFWLLTIVTLGFYQLLAYWV. The Extracellular portion of the chain corresponds to 90-209; sequence KSLFVKVRFQ…RKIYNMNALA (120 aa). Residues 210 to 230 form a helical membrane-spanning segment; sequence LALTPILVILFKEVLGPFYLF. The Cytoplasmic portion of the chain corresponds to 231-242; that stretch reads QCFSVALWYSDN. The helical transmembrane segment at 243–263 threads the bilayer; that stretch reads YAYYASVIVIITVGSAAVAVY. Residues 264–297 are Extracellular-facing; it reads QMRAQEKRIRNMVGDTISVIVRRDGHDITIDASE. The helical transmembrane segment at 298–318 threads the bilayer; the sequence is IVPMDILILPSNTFILPCDCL. Residues 319–414 are Cytoplasmic-facing; that stretch reads LMNGTVIVNE…KPQEKEALKD (96 aa). The chain crosses the membrane as a helical span at residues 415-435; the sequence is VMVFILVLGFIALIGFIYTVI. Residues 436 to 451 lie on the Extracellular side of the membrane; the sequence is EMVSRGESLKHIIIRS. Residues 452–472 form a helical membrane-spanning segment; sequence LDIITIVVPPALPAAMSVGII. The Cytoplasmic segment spans residues 473-935; the sequence is NANSRLKKKK…KEGRCALVTS (463 aa). Asp-503 serves as the catalytic 4-aspartylphosphate intermediate. Residues 595 to 617 are disordered; it reads ETQDFDTVQPTVLRPPPEQATYH. Mg(2+) is bound by residues Asp-883 and Asp-887. Residues 936–956 traverse the membrane as a helical segment; it reads YAVSKYMAAYSLNEFLSVMLL. Residues 957–962 lie on the Extracellular side of the membrane; sequence YNDGTN. A helical membrane pass occupies residues 963–983; the sequence is ISDGQFLYIDLVLITLVALFL. Residues 984–1007 are Cytoplasmic-facing; that stretch reads GNTEASRKLSGIPPPRRLATSAFY. Residues 1008–1028 form a helical membrane-spanning segment; the sequence is FSVFGQMFFNIITQTTGYLLV. The Extracellular portion of the chain corresponds to 1029–1046; it reads RGQSWYVPNPEELDNTTT. Residues 1047-1067 traverse the membrane as a helical segment; the sequence is MIGTTVFFTSCCMYLGYAFVY. Over 1068–1085 the chain is Cytoplasmic; that stretch reads SKGHPYRRSVFTNWLLCG. A helical transmembrane segment spans residues 1086-1106; the sequence is IIFVIGAINMVMIFTNMGFLM. The Extracellular portion of the chain corresponds to 1107–1120; sequence NLMGFVYVPSTSMR. Residues 1121–1141 traverse the membrane as a helical segment; the sequence is FILLAISLAGVFLSLLYEHFF. Over 1142–1203 the chain is Cytoplasmic; sequence VEKVVAIHFE…DRKETIESKC (62 aa).

This sequence belongs to the cation transport ATPase (P-type) (TC 3.A.3) family. Type V subfamily. As to expression, expressed in the 20 intestinal cells and in the excretory cell.

Its subcellular location is the apical cell membrane. The catalysed reaction is ATP + H2O = ADP + phosphate + H(+). Its function is as follows. Involved in the uptake and/or transport of polyamines, probably through ATP hydrolysis. This contributes to the maintenance of intracellular polyamine levels. Polyamines are essential for cell proliferation and are implicated in cellular processes, ranging from DNA replication to apoptosis. The protein is Cation-transporting ATPase catp-5 of Caenorhabditis elegans.